We begin with the raw amino-acid sequence, 255 residues long: Taurine import ATP-binding protein TauB (255 aa).

The ABC transporter domain maps to 2 to 229 (LQISHLYADY…RFVAGESSRS (228 aa)). 34 to 41 (GPSGCGKT) contacts ATP.

Belongs to the ABC transporter superfamily. Taurine importer (TC 3.A.1.17.1) family. In terms of assembly, the complex is composed of two ATP-binding proteins (TauB), two transmembrane proteins (TauC) and a solute-binding protein (TauA).

It is found in the cell inner membrane. It catalyses the reaction taurine(out) + ATP + H2O = taurine(in) + ADP + phosphate + H(+). Its function is as follows. Part of the ABC transporter complex TauABC involved in taurine import. Responsible for energy coupling to the transport system. This Escherichia coli O6:H1 (strain CFT073 / ATCC 700928 / UPEC) protein is Taurine import ATP-binding protein TauB.